The sequence spans 175 residues: Protein SELF-PRUNING (175 aa).

Belongs to the phosphatidylethanolamine-binding protein family.

The protein resides in the cytoplasm. Its function is as follows. Not known. In plants homozygous for the recessive allele of the SP gene, sympodial segments develop progressively fewer nodes until the shoot is terminated by two consecutive. inflorescences. This is Protein SELF-PRUNING (SP) from Solanum lycopersicum (Tomato).